Here is a 432-residue protein sequence, read N- to C-terminus: Luc7-like protein 3 (432 aa).

Position 1 is an N-acetylmethionine (Met-1). 3 positions are modified to phosphoserine: Ser-3, Ser-110, and Ser-115. A coiled-coil region spans residues 124–181 (KNEEKIQVLTDKIDVLLQQIEELGSEGKVEEAQGMMKLVEQLKEERELLRSTTSTIES). Position 231 is an N6-acetyllysine (Lys-231). Positions 234–287 (LRKRTEEPDRDERLKKEKQEREEREKEREREREERERKRRREEEEREKERARDR) are enriched in basic and acidic residues. Residues 234 to 432 (LRKRTEEPDR…IKSEGDTQSN (199 aa)) are disordered. Residues 288-301 (ERRKRSRSRSRHSS) show a composition bias toward basic residues. Residues 302-311 (RTSDRRCSRS) show a composition bias toward basic and acidic residues. Over residues 312 to 367 (RDHKRSRSRDRRRSRSRDRRRSRSHDRSERKHRSRSRDRRRSKSRDRKSYKHRSKS) the composition is skewed to basic residues. Positions 368–414 (RDREQDRKSKEKEKKGSDDKKSSVKSSSREKQSEDTNPESKESDTKN) are enriched in basic and acidic residues. Ser-420 carries the post-translational modification Phosphoserine. The segment covering 421 to 432 (EDIKSEGDTQSN) has biased composition (basic and acidic residues). Lys-424 is covalently cross-linked (Glycyl lysine isopeptide (Lys-Gly) (interchain with G-Cter in SUMO1); alternate). Lys-424 participates in a covalent cross-link: Glycyl lysine isopeptide (Lys-Gly) (interchain with G-Cter in SUMO2); alternate. 2 positions are modified to phosphoserine: Ser-425 and Ser-431.

This sequence belongs to the Luc7 family. As to quaternary structure, may interact with SFRS1 and form homodimers. Interacts with JMJD6. Interacts with RBM25. Interacts with RSRC1 (via Arg/Ser-rich domain). Interacts with RRP1B.

It localises to the nucleus speckle. Its function is as follows. Binds cAMP regulatory element DNA sequence. May play a role in RNA splicing. The chain is Luc7-like protein 3 (Luc7l3) from Mus musculus (Mouse).